Consider the following 271-residue polypeptide: MSRYKKMFQKLSFLKEGCFVPFVVIGDPSLEMSLKIIETLIENGADALELGIPFSDPLADGPIIQKASLRALYKKNTFLQCFELIENIRNKYLHLPIGILLYANLVYNYGIKNFYYQCFRSGLDSVLIADIPIEEYEPFYKIANQYNINSIFICPPDADDSLLSKISLYAKGYIYLLSRPGVTGIEKKTISLSNIFIEKIKKYNSLPLLQGFGIENPTQIQKSILSGTNGVICGSAIIDIIEKNLNKEKKMINEIKNFTSKLKKATKFVQS.

Catalysis depends on proton acceptor residues E49 and D60.

Belongs to the TrpA family. Tetramer of two alpha and two beta chains.

It carries out the reaction (1S,2R)-1-C-(indol-3-yl)glycerol 3-phosphate + L-serine = D-glyceraldehyde 3-phosphate + L-tryptophan + H2O. The protein operates within amino-acid biosynthesis; L-tryptophan biosynthesis; L-tryptophan from chorismate: step 5/5. Its function is as follows. The alpha subunit is responsible for the aldol cleavage of indoleglycerol phosphate to indole and glyceraldehyde 3-phosphate. The sequence is that of Tryptophan synthase alpha chain from Buchnera aphidicola subsp. Schizaphis graminum (strain Sg).